A 263-amino-acid polypeptide reads, in one-letter code: Type III pantothenate kinase (263 aa).

9–16 (DIGNTSIK) contributes to the ATP binding site. Residues Tyr-103 and 110–113 (GADR) each bind substrate. Asp-112 functions as the Proton acceptor in the catalytic mechanism. Residue Asp-134 participates in K(+) binding. Position 137 (Thr-137) interacts with ATP. Thr-190 is a substrate binding site.

The protein belongs to the type III pantothenate kinase family. In terms of assembly, homodimer. Requires NH4(+) as cofactor. K(+) serves as cofactor.

The protein localises to the cytoplasm. It catalyses the reaction (R)-pantothenate + ATP = (R)-4'-phosphopantothenate + ADP + H(+). Its pathway is cofactor biosynthesis; coenzyme A biosynthesis; CoA from (R)-pantothenate: step 1/5. Its function is as follows. Catalyzes the phosphorylation of pantothenate (Pan), the first step in CoA biosynthesis. The protein is Type III pantothenate kinase of Desulfovibrio desulfuricans (strain ATCC 27774 / DSM 6949 / MB).